The primary structure comprises 494 residues: Metal cation symporter ZIP14 (494 aa).

Residues 1–34 (MTLRRASGCRQLTLTIGLALTLGLLQWPIGDVRG) form the signal peptide. Residues 35 to 152 (QDGASPAQVL…PTEAEVWGYG (118 aa)) are Extracellular-facing. Residues 153–173 (LLCVTVISLCSLVGASVVPFM) traverse the membrane as a helical segment. Topologically, residues 174 to 181 (RKTFYKRL) are cytoplasmic. Residues 182-202 (LLYFIALAIGTLYSNALFQLI) traverse the membrane as a helical segment. Residues 203 to 219 (PEAFGFDPMEDYYVPKS) lie on the Extracellular side of the membrane. Residues 220–240 (AVVFGGFYLFFFTEKILKMIL) traverse the membrane as a helical segment. Topologically, residues 241–397 (KPKDTGGHGH…LLNAGMSIQQ (157 aa)) are cytoplasmic. Residues 248–255 (HGHGHSHF) carry the HHHGHXHX-motif motif. The short motif at 376–381 (EEFPHE) is the XEXPHE-motif element. Residues 398–418 (ALFFNFLSACCCYLGMGFGIL) form a helical membrane-spanning segment. At 419 to 426 (AGNNFSPN) the chain is on the extracellular side. The helical transmembrane segment at 427 to 447 (WIFALAGGMFLYIALADMFPE) threads the bilayer. Topologically, residues 448–462 (MNEVSREEEEAGGSG) are cytoplasmic. A helical membrane pass occupies residues 463 to 483 (FLLTFALQNAGLLTGFAIMLV). The Extracellular portion of the chain corresponds to 484–494 (LTIYSGQIQLG).

Belongs to the ZIP transporter (TC 2.A.5) family. As to quaternary structure, homotrimer.

It localises to the cell membrane. The protein localises to the apical cell membrane. It is found in the basolateral cell membrane. The protein resides in the early endosome membrane. Its subcellular location is the late endosome membrane. It localises to the lysosome membrane. It catalyses the reaction Zn(2+)(out) + 2 hydrogencarbonate(out) = Zn(2+)(in) + 2 hydrogencarbonate(in). The enzyme catalyses Mn(2+)(out) + 2 hydrogencarbonate(out) = Mn(2+)(in) + 2 hydrogencarbonate(in). The catalysed reaction is Fe(2+)(out) + 2 hydrogencarbonate(out) = Fe(2+)(in) + 2 hydrogencarbonate(in). It carries out the reaction Cd(2+)(out) + 2 hydrogencarbonate(out) = Cd(2+)(in) + 2 hydrogencarbonate(in). Functionally, broad-scope metal ion transporter with a preference for zinc uptake. Also mediates cellular uptake of nontransferrin-bound iron. In terms of biological role, electroneutral transporter of the plasma membrane mediating the cellular uptake of the divalent metal cations zinc, manganese and iron that are important for tissue homeostasis, metabolism, development and immunity. Functions as an energy-dependent symporter, transporting through the membranes an electroneutral complex composed of a divalent metal cation and two bicarbonate anions. Beside these endogenous cellular substrates, can also import cadmium a non-essential metal which is cytotoxic and carcinogenic. The polypeptide is Metal cation symporter ZIP14 (Danio rerio (Zebrafish)).